The sequence spans 578 residues: Asparagine synthetase [glutamine-hydrolyzing] 3 (578 aa).

Cys-2 acts as the For GATase activity in catalysis. Positions 2-185 constitute a Glutamine amidotransferase type-2 domain; the sequence is CGILAVLGCV…PGHIYSSKQG (184 aa). L-glutamine is bound by residues 50–54, 75–77, and Asp-98; these read RLAIV and NGE. An Asparagine synthetase domain is found at 210–450; the sequence is VRNTFEKAVI…LPKHILYRQK (241 aa). ATP is bound by residues Leu-231, Ile-267, and 341–342; that span reads SG. Over residues 555 to 572 the composition is skewed to basic and acidic residues; that stretch reads GEDKTEDSRPEKLQKLAE. Residues 555 to 578 form a disordered region; it reads GEDKTEDSRPEKLQKLAEKTPAIV.

The enzyme catalyses L-aspartate + L-glutamine + ATP + H2O = L-asparagine + L-glutamate + AMP + diphosphate + H(+). It participates in amino-acid biosynthesis; L-asparagine biosynthesis. Functionally, essential for nitrogen assimilation, distribution and remobilization within the plant via the phloem. The sequence is that of Asparagine synthetase [glutamine-hydrolyzing] 3 (ASN3) from Arabidopsis thaliana (Mouse-ear cress).